The following is a 146-amino-acid chain: Large ribosomal subunit protein uL15 (146 aa).

The segment at M1–Q54 is disordered. 2 stretches are compositionally biased toward gly residues: residues R21 to A31 and S42 to G52.

It belongs to the universal ribosomal protein uL15 family. In terms of assembly, part of the 50S ribosomal subunit.

In terms of biological role, binds to the 23S rRNA. The polypeptide is Large ribosomal subunit protein uL15 (Clostridium beijerinckii (strain ATCC 51743 / NCIMB 8052) (Clostridium acetobutylicum)).